A 468-amino-acid chain; its full sequence is Putative magnesium transporter MRS2-G (468 aa).

Disordered stretches follow at residues 1–76 (MGRR…AGKV) and 182–205 (NGQPGGDDHGEKHDDSPGDQVPRL). Low complexity-rich tracts occupy residues 14–23 (ASNASTSSST) and 31–45 (RLPSLTRPRASSSPS). Pro residues predominate over residues 46–67 (PASPSPPPPSASHPAPPSPPLA). Residues 187-197 (GDDHGEKHDDS) are compositionally biased toward basic and acidic residues. A run of 2 helical transmembrane segments spans residues 402–422 (LTLTIASFGIAVNTFIAGAFA) and 437–457 (FFWPFVGGTSSGCFMICIVLL).

The protein belongs to the CorA metal ion transporter (MIT) (TC 1.A.35.5) family.

It is found in the membrane. In terms of biological role, putative magnesium transporter. The protein is Putative magnesium transporter MRS2-G (MRS2-G) of Oryza sativa subsp. indica (Rice).